Consider the following 359-residue polypeptide: Protein RecA (359 aa).

74-81 (GPESSGKT) serves as a coordination point for ATP.

The protein belongs to the RecA family.

The protein resides in the cytoplasm. In terms of biological role, can catalyze the hydrolysis of ATP in the presence of single-stranded DNA, the ATP-dependent uptake of single-stranded DNA by duplex DNA, and the ATP-dependent hybridization of homologous single-stranded DNAs. It interacts with LexA causing its activation and leading to its autocatalytic cleavage. This chain is Protein RecA, found in Anaplasma marginale (strain St. Maries).